The chain runs to 64 residues: Large ribosomal subunit protein bL35 (64 aa).

Basic residues predominate over residues 1–42; that stretch reads MPKAKTHSGASKRFRRTGTGKIVRQKANRRHLLEHKPTKRTR. The tract at residues 1 to 64 is disordered; that stretch reads MPKAKTHSGA…NSRINKLLNG (64 aa). Positions 48–58 are enriched in polar residues; it reads TTVSAADNSRI.

It belongs to the bacterial ribosomal protein bL35 family.

The protein is Large ribosomal subunit protein bL35 of Mycolicibacterium smegmatis (strain ATCC 700084 / mc(2)155) (Mycobacterium smegmatis).